Consider the following 307-residue polypeptide: Ribonuclease Z (307 aa).

Zn(2+)-binding residues include H63, H65, D67, H68, H141, D212, and H270. Catalysis depends on D67, which acts as the Proton acceptor.

The protein belongs to the RNase Z family. As to quaternary structure, homodimer. It depends on Zn(2+) as a cofactor.

It carries out the reaction Endonucleolytic cleavage of RNA, removing extra 3' nucleotides from tRNA precursor, generating 3' termini of tRNAs. A 3'-hydroxy group is left at the tRNA terminus and a 5'-phosphoryl group is left at the trailer molecule.. Its function is as follows. Zinc phosphodiesterase, which displays some tRNA 3'-processing endonuclease activity. Probably involved in tRNA maturation, by removing a 3'-trailer from precursor tRNA. The sequence is that of Ribonuclease Z from Bacillus cereus (strain ZK / E33L).